A 123-amino-acid polypeptide reads, in one-letter code: Large ribosomal subunit protein bL12 (123 aa).

The protein belongs to the bacterial ribosomal protein bL12 family. Homodimer. Part of the ribosomal stalk of the 50S ribosomal subunit. Forms a multimeric L10(L12)X complex, where L10 forms an elongated spine to which 2 to 4 L12 dimers bind in a sequential fashion. Binds GTP-bound translation factors.

In terms of biological role, forms part of the ribosomal stalk which helps the ribosome interact with GTP-bound translation factors. Is thus essential for accurate translation. This chain is Large ribosomal subunit protein bL12, found in Neisseria perflava.